The sequence spans 221 residues: ATP phosphoribosyltransferase (221 aa).

Belongs to the ATP phosphoribosyltransferase family. Short subfamily. In terms of assembly, heteromultimer composed of HisG and HisZ subunits.

It localises to the cytoplasm. It catalyses the reaction 1-(5-phospho-beta-D-ribosyl)-ATP + diphosphate = 5-phospho-alpha-D-ribose 1-diphosphate + ATP. The protein operates within amino-acid biosynthesis; L-histidine biosynthesis; L-histidine from 5-phospho-alpha-D-ribose 1-diphosphate: step 1/9. Functionally, catalyzes the condensation of ATP and 5-phosphoribose 1-diphosphate to form N'-(5'-phosphoribosyl)-ATP (PR-ATP). Has a crucial role in the pathway because the rate of histidine biosynthesis seems to be controlled primarily by regulation of HisG enzymatic activity. In Carboxydothermus hydrogenoformans (strain ATCC BAA-161 / DSM 6008 / Z-2901), this protein is ATP phosphoribosyltransferase.